Consider the following 314-residue polypeptide: DNA-directed RNA polymerase subunit alpha (314 aa).

The tract at residues 1-228 is alpha N-terminal domain (alpha-NTD); the sequence is MIEFEKPKIH…EHLAIFVNLN (228 aa). The alpha C-terminal domain (alpha-CTD) stretch occupies residues 245–314; it reads KEKMLEMTIE…LLGLGFRSED (70 aa).

This sequence belongs to the RNA polymerase alpha chain family. Homodimer. The RNAP catalytic core consists of 2 alpha, 1 beta, 1 beta' and 1 omega subunit. When a sigma factor is associated with the core the holoenzyme is formed, which can initiate transcription.

It catalyses the reaction RNA(n) + a ribonucleoside 5'-triphosphate = RNA(n+1) + diphosphate. Its function is as follows. DNA-dependent RNA polymerase catalyzes the transcription of DNA into RNA using the four ribonucleoside triphosphates as substrates. This chain is DNA-directed RNA polymerase subunit alpha, found in Pediococcus pentosaceus (strain ATCC 25745 / CCUG 21536 / LMG 10740 / 183-1w).